The chain runs to 273 residues: L-fucose dehydrogenase (273 aa).

12 residues coordinate NAD(+): Arg19, Ile21, Asp40, Lys41, Asp62, Val63, Asn89, Tyr154, Lys158, Ile187, Thr189, and Leu191. Tyr154 functions as the Proton acceptor in the catalytic mechanism.

This sequence belongs to the short-chain dehydrogenases/reductases (SDR) family. In terms of assembly, homotetramer.

It localises to the cytoplasm. It carries out the reaction L-fucose + NAD(+) = L-fucono-1,5-lactone + NADH + H(+). It catalyses the reaction D-arabinose + NAD(+) = D-arabinono-1,5-lactone + NADH + H(+). The enzyme catalyses L-galactose + NAD(+) = L-galactono-1,5-lactone + NADH + H(+). It participates in carbohydrate degradation; L-fucose degradation. In terms of biological role, catalyzes the NAD(+)-dependent oxidation of L-fucose, yielding L-fucono-1,5-lactone, which rapidly converts spontaneously to L-fucone-1,4-lactone. Can also act on D-arabinose and L-galactose, with lower catalytic efficiency. Does not use NADPH. May be the initial enzyme of the putative L-fucose degradation pathway in mammals. The sequence is that of L-fucose dehydrogenase from Mus musculus (Mouse).